The primary structure comprises 333 residues: L-lactate dehydrogenase B chain (333 aa).

NAD(+) is bound by residues 29–57 and R99; that span reads GQVG…LEDK. Residues R106, N138, and R169 each coordinate substrate. N138 provides a ligand contact to NAD(+). Residue H193 is the Proton acceptor of the active site. Position 248 (T248) interacts with substrate.

Belongs to the LDH/MDH superfamily. LDH family. In terms of assembly, homotetramer.

It is found in the cytoplasm. It carries out the reaction (S)-lactate + NAD(+) = pyruvate + NADH + H(+). Its pathway is fermentation; pyruvate fermentation to lactate; (S)-lactate from pyruvate: step 1/1. In terms of biological role, interconverts simultaneously and stereospecifically pyruvate and lactate with concomitant interconversion of NADH and NAD(+). This is L-lactate dehydrogenase B chain (LDHB) from Caiman crocodilus apaporiensis (Rio Apaporis caiman).